The following is a 535-amino-acid chain: Probable fucosyltransferase 4 (535 aa).

The Cytoplasmic portion of the chain corresponds to 1-20 (MYHIFQISGEVIKGLGLKTK). A helical; Signal-anchor for type II membrane protein membrane pass occupies residues 21-41 (ILITIVFSTLLILSVMLLSFS). The Lumenal portion of the chain corresponds to 42–535 (NNFNNKLFAA…IWGLKLFDEL (494 aa)). N-linked (GlcNAc...) asparagine glycosylation is found at N136, N226, N230, N377, and N409.

It belongs to the glycosyltransferase 37 family. In terms of tissue distribution, expressed in roots, stems, leaves, flowers, siliques and seedlings.

It localises to the golgi apparatus. Its subcellular location is the golgi stack membrane. It functions in the pathway protein modification; protein glycosylation. Its function is as follows. May be involved in cell wall biosynthesis. May act as a fucosyltransferase. This chain is Probable fucosyltransferase 4 (FUT4), found in Arabidopsis thaliana (Mouse-ear cress).